We begin with the raw amino-acid sequence, 499 residues long: Probable malate:quinone oxidoreductase (499 aa).

This sequence belongs to the MQO family. FAD serves as cofactor.

It carries out the reaction (S)-malate + a quinone = a quinol + oxaloacetate. The protein operates within carbohydrate metabolism; tricarboxylic acid cycle; oxaloacetate from (S)-malate (quinone route): step 1/1. This is Probable malate:quinone oxidoreductase from Exiguobacterium sp. (strain ATCC BAA-1283 / AT1b).